We begin with the raw amino-acid sequence, 360 residues long: Glutamine synthetase (360 aa).

The 80-residue stretch at 26-105 (IMAEYIWIDA…VLSECWNADG (80 aa)) folds into the GS beta-grasp domain. The region spanning 112 to 360 (YRHECAKLME…METIYGSVDN (249 aa)) is the GS catalytic domain.

Belongs to the glutamine synthetase family. In terms of assembly, homooctamer.

Its subcellular location is the cytoplasm. It catalyses the reaction L-glutamate + NH4(+) + ATP = L-glutamine + ADP + phosphate + H(+). The polypeptide is Glutamine synthetase (GLN1) (Colletotrichum gloeosporioides (Anthracnose fungus)).